A 160-amino-acid chain; its full sequence is Ribosomal RNA large subunit methyltransferase H (160 aa).

Residues Leu76, Gly108, and 127-132 each bind S-adenosyl-L-methionine; that span reads LGKMTW.

It belongs to the RNA methyltransferase RlmH family. Homodimer.

The protein resides in the cytoplasm. The enzyme catalyses pseudouridine(1915) in 23S rRNA + S-adenosyl-L-methionine = N(3)-methylpseudouridine(1915) in 23S rRNA + S-adenosyl-L-homocysteine + H(+). Specifically methylates the pseudouridine at position 1915 (m3Psi1915) in 23S rRNA. In Rhizobium leguminosarum bv. trifolii (strain WSM2304), this protein is Ribosomal RNA large subunit methyltransferase H.